A 57-amino-acid chain; its full sequence is UPF0391 membrane protein RB0084 (57 aa).

2 helical membrane-spanning segments follow: residues 4–24 (WALIFFVISLIAGFLGFSGVS) and 33–53 (ILFYIAVIIFLVFLVLALAVG).

This sequence belongs to the UPF0391 family.

It localises to the cell membrane. This is UPF0391 membrane protein RB0084 from Rhizobium meliloti (strain 1021) (Ensifer meliloti).